The sequence spans 115 residues: Aspartate 1-decarboxylase (115 aa).

Residue Ser24 is the Schiff-base intermediate with substrate; via pyruvic acid of the active site. Ser24 carries the pyruvic acid (Ser) modification. Thr56 contacts substrate. Catalysis depends on Tyr57, which acts as the Proton donor. 72-74 is a substrate binding site; sequence GAA.

This sequence belongs to the PanD family. In terms of assembly, heterooctamer of four alpha and four beta subunits. The cofactor is pyruvate. Post-translationally, is synthesized initially as an inactive proenzyme, which is activated by self-cleavage at a specific serine bond to produce a beta-subunit with a hydroxyl group at its C-terminus and an alpha-subunit with a pyruvoyl group at its N-terminus.

The protein localises to the cytoplasm. The enzyme catalyses L-aspartate + H(+) = beta-alanine + CO2. It functions in the pathway cofactor biosynthesis; (R)-pantothenate biosynthesis; beta-alanine from L-aspartate: step 1/1. Its function is as follows. Catalyzes the pyruvoyl-dependent decarboxylation of aspartate to produce beta-alanine. This Pseudothermotoga lettingae (strain ATCC BAA-301 / DSM 14385 / NBRC 107922 / TMO) (Thermotoga lettingae) protein is Aspartate 1-decarboxylase.